An 875-amino-acid chain; its full sequence is Alanine--tRNA ligase (875 aa).

The Zn(2+) site is built by His-565, His-569, Cys-666, and His-670.

This sequence belongs to the class-II aminoacyl-tRNA synthetase family. Zn(2+) serves as cofactor.

The protein localises to the cytoplasm. The enzyme catalyses tRNA(Ala) + L-alanine + ATP = L-alanyl-tRNA(Ala) + AMP + diphosphate. Catalyzes the attachment of alanine to tRNA(Ala) in a two-step reaction: alanine is first activated by ATP to form Ala-AMP and then transferred to the acceptor end of tRNA(Ala). Also edits incorrectly charged Ser-tRNA(Ala) and Gly-tRNA(Ala) via its editing domain. The sequence is that of Alanine--tRNA ligase from Methylibium petroleiphilum (strain ATCC BAA-1232 / LMG 22953 / PM1).